A 165-amino-acid polypeptide reads, in one-letter code: Small ribosomal subunit protein uS3m (165 aa).

A mitochondrion-targeting transit peptide spans 1-30 (MNFLKKLLPQVATEVQQLSRSGFHTSSVCC).

It belongs to the universal ribosomal protein uS3 family. In terms of assembly, component of the mitochondrial ribosome small subunit (28S) which comprises a 12S rRNA and about 30 distinct proteins.

The protein resides in the mitochondrion. In Drosophila melanogaster (Fruit fly), this protein is Small ribosomal subunit protein uS3m (mRpS24).